Consider the following 661-residue polypeptide: Solute carrier organic anion transporter family member 1A4 (661 aa).

At 1 to 20 (MGKSEKRVATHGVRCFAKIK) the chain is on the cytoplasmic side. Residues 21-40 (MFLLALTCAYVSKSLSGTYM) traverse the membrane as a helical segment. The Extracellular segment spans residues 41 to 59 (NSMLTQIERQFGIPTSIVG). A helical transmembrane segment spans residues 60-80 (LINGSFEIGNLLLIIFVSYFG). Residues 81–86 (TKLHRP) are Cytoplasmic-facing. A helical transmembrane segment spans residues 87 to 111 (IMIGVGCAVMGLGCFLISLPHFLMG). The Extracellular segment spans residues 112 to 154 (QYEYETILPTSNVSSNSFFCVENRSQTLNPTQDPSECVKEMKS). Residues Asn-123 and Asn-134 are each glycosylated (N-linked (GlcNAc...) asparagine). A helical membrane pass occupies residues 155 to 183 (LMWIYVLVGNIIRGIGETPIMPLGISYIE). Over 184 to 202 (DFAKSENSPLYIGILETGM) the chain is Cytoplasmic. The helical transmembrane segment at 203 to 223 (TIGPLIGLLLASSCANIYVDI) threads the bilayer. Residues 224–241 (ESVNTDDLTITPTDTRWV) are Extracellular-facing. The helical transmembrane segment at 242–266 (GAWWIGFLVCAGVNILTSFPFFFFP) threads the bilayer. The Cytoplasmic segment spans residues 267–310 (KTLPKEGLQENVDGTENAKEKKHRKKAKEEKRGITKDFFVFMKS). The helical transmembrane segment at 311 to 332 (LSCNPIYMLFILISVLQFNAFI) threads the bilayer. Residues 333-352 (NSFTFMPKYLEQQYGKSTAE) are Extracellular-facing. The chain crosses the membrane as a helical span at residues 353–376 (VVFLMGLYMLPPICLGYLIGGLIM). The Cytoplasmic portion of the chain corresponds to 377–380 (KKFK). The chain crosses the membrane as a helical span at residues 381–404 (VTVKKAAHLAFWLCLSEYLLSFLS). The Extracellular segment spans residues 405 to 512 (YVMTCDNFPV…PDCANKLQYF (108 aa)). In terms of domain architecture, Kazal-like spans 432–487 (NKVLADCNTRCNCSTNTWDPVCGDNGLAYMSACLAGCEKSVGTGTNMVFQNCSCIQ). 3 disulfides stabilise this stretch: Cys-438-Cys-468, Cys-444-Cys-464, and Cys-453-Cys-485. Asn-443 carries an N-linked (GlcNAc...) asparagine glycan. N-linked (GlcNAc...) asparagine glycans are attached at residues Asn-482 and Asn-491. Residues 513-535 (LIIAIFGCFIYSLAGIPGYMVLL) traverse the membrane as a helical segment. Residues 536-544 (RCIKSEEKS) are Cytoplasmic-facing. A helical transmembrane segment spans residues 545–570 (LGVGLHAFCIRILAGIPAPIYFGALI). At 571 to 604 (DRTCLHWGTLKCGEPGACRMYDINSFRRLYLGLP) the chain is on the extracellular side. The helical transmembrane segment at 605-622 (AALRGASFVPAFFILRLT) threads the bilayer. The Cytoplasmic segment spans residues 623-661 (RTFQFPGDIESSKTDHAEMKLTLKESECTEVLRSKVTED). 2 positions are modified to phosphoserine: Ser-633 and Ser-634.

Belongs to the organo anion transporter (TC 2.A.60) family. In terms of tissue distribution, highly expressed in brain, liver, and kidney but not expressed in heart, spleen, lung, skeletal muscle, and testis.

Its subcellular location is the cell membrane. It catalyses the reaction estrone 3-sulfate(out) = estrone 3-sulfate(in). The catalysed reaction is taurocholate(out) = taurocholate(in). It carries out the reaction prostaglandin E2(out) = prostaglandin E2(in). The enzyme catalyses L-thyroxine(out) = L-thyroxine(in). In terms of biological role, mediates the Na(+)-independent transport of organic anions such as taurocholate, cholate, 17-beta-glucuronosyl estradiol, prostaglandin E2, estrone 3-sulfate, L-thyroxine (T4), the cardiac glycosides ouabain and digoxin and thyroid hormones. May play an especially important role in the brain accumulation and toxicity of digoxin and in the hepatobiliary and renal excretion of cardiac glycosides. Shows a pH-sensitive substrate specificity which may be ascribed to the protonation state of the binding site and leads to a stimulation of substrate transport in an acidic microenvironment. Hydrogencarbonate/HCO3(-) acts as the probable counteranion that exchanges for organic anions. This is Solute carrier organic anion transporter family member 1A4 (Slco1a4) from Rattus norvegicus (Rat).